A 1213-amino-acid chain; its full sequence is A disintegrin and metalloproteinase with thrombospondin motifs 19 (1213 aa).

The first 27 residues, 1-27, serve as a signal peptide directing secretion; it reads MGKNREMRLTHICCCCLLYQLGFLSNG. The propeptide occupies 28-322; the sequence is IVSELQFAPD…KIAESGRGKR (295 aa). Disordered regions lie at residues 49-161 and 192-215; these read WRRE…PPPA and FLAPRFAVEQRPNPGPGPTGAASA. The segment covering 52–71 has biased composition (gly residues); sequence EPVDPAGGSGGSADPGWVRG. A compositionally biased stretch (acidic residues) spans 110–119; that stretch reads RPPPPSEGEE. Low complexity predominate over residues 120–139; sequence DEELESQELPRGSSGAAALS. Residues 140–155 are compositionally biased toward pro residues; sequence PGAPASWQPPPPPQPP. Residue asparagine 266 is glycosylated (N-linked (GlcNAc...) asparagine). The Cysteine switch signature appears at 298-305; sequence HYCGIISD. Cysteine 300 is a binding site for Zn(2+). In terms of domain architecture, Peptidase M12B spans 331–551; sequence YNIETVVVAD…KASNCLLQTN (221 aa). 11 cysteine pairs are disulfide-bonded: cysteine 407-cysteine 472, cysteine 447-cysteine 454, cysteine 466-cysteine 546, cysteine 505-cysteine 530, cysteine 575-cysteine 599, cysteine 586-cysteine 607, cysteine 594-cysteine 626, cysteine 620-cysteine 631, cysteine 651-cysteine 686, cysteine 655-cysteine 691, and cysteine 666-cysteine 676. Zn(2+) is bound at residue histidine 488. The active site involves glutamate 489. Zn(2+)-binding residues include histidine 492 and histidine 498. Residues 552 to 639 enclose the Disintegrin domain; it reads PQSVNSVMVP…ECTSRTSAPE (88 aa). The TSP type-1 1 domain occupies 640–692; sequence HLAGEWSLWSPCSRTCSAGISSRERKCPGLDSEARDCNGPRKQYRICENPPCP. The segment at 797-920 is spacer; that stretch reads IIKGDFNHTR…PENQSSKAPE (124 aa). Residues asparagine 803, asparagine 913, asparagine 955, and asparagine 1015 are each glycosylated (N-linked (GlcNAc...) asparagine). TSP type-1 domains lie at 921-981, 982-1043, 1045-1089, and 1093-1150; these read PLFM…NEQP, CQTR…QDCM, VWEA…EDCE, and KCYV…QPCN. Cystine bridges form between cysteine 994-cysteine 1037, cysteine 998-cysteine 1042, and cysteine 1009-cysteine 1026. In terms of domain architecture, PLAC spans 1166-1205; the sequence is LTFKCLGDQWPVYCRVIREKNLCQDMRWYQRCCETCRDFY.

The cofactor is Zn(2+). Post-translationally, the precursor is cleaved by a furin endopeptidase. In terms of processing, glycosylated. Can be O-fucosylated by POFUT2 on a serine or a threonine residue found within the consensus sequence C1-X(2)-(S/T)-C2-G of the TSP type-1 repeat domains where C1 and C2 are the first and second cysteine residue of the repeat, respectively. Fucosylated repeats can then be further glycosylated by the addition of a beta-1,3-glucose residue by the glucosyltransferase, B3GALTL. Fucosylation mediates the efficient secretion of ADAMTS family members. Can also be C-glycosylated with one or two mannose molecules on tryptophan residues within the consensus sequence W-X-X-W of the TPRs, and N-glycosylated. These other glycosylations can also facilitate secretion. In terms of tissue distribution, expressed in fetal lung, but not in any adult tissues examined. Expression was detected in an osteosarcoma cDNA library.

The protein resides in the secreted. It is found in the extracellular space. Its subcellular location is the extracellular matrix. The sequence is that of A disintegrin and metalloproteinase with thrombospondin motifs 19 (ADAMTS19) from Homo sapiens (Human).